A 346-amino-acid polypeptide reads, in one-letter code: Flap endonuclease 1 (346 aa).

Residues 1 to 100 are N-domain; the sequence is MGVDIKELVE…KELERRYQIK (100 aa). Positions 29, 82, 154, 156, 175, 177, and 238 each coordinate Mg(2+). The tract at residues 118–260 is I-domain; the sequence is EARIYAQQTS…KALKLVKELK (143 aa). Residues 336 to 344 are interaction with PCNA; it reads KQQSLESWF.

The protein belongs to the XPG/RAD2 endonuclease family. FEN1 subfamily. In terms of assembly, interacts with PCNA. PCNA stimulates the nuclease activity without altering cleavage specificity. The cofactor is Mg(2+).

Its function is as follows. Structure-specific nuclease with 5'-flap endonuclease and 5'-3' exonuclease activities involved in DNA replication and repair. During DNA replication, cleaves the 5'-overhanging flap structure that is generated by displacement synthesis when DNA polymerase encounters the 5'-end of a downstream Okazaki fragment. Binds the unpaired 3'-DNA end and kinks the DNA to facilitate 5' cleavage specificity. Cleaves one nucleotide into the double-stranded DNA from the junction in flap DNA, leaving a nick for ligation. Also involved in the base excision repair (BER) pathway. Acts as a genome stabilization factor that prevents flaps from equilibrating into structures that lead to duplications and deletions. Also possesses 5'-3' exonuclease activity on nicked or gapped double-stranded DNA. The sequence is that of Flap endonuclease 1 from Thermofilum pendens (strain DSM 2475 / Hrk 5).